A 555-amino-acid chain; its full sequence is MGGQTVWMTLSFKLLLYYCMISLLMPAIFILATRAQVDKFRKFNESTQTKSSQELFEEAFEEQGYYLQRLFLQYGDNGTLTYEGLQKLLGSLGLGEVSVLEIRHGEAKHPSQSISHSHSHEDHHPSQGTTNSPPLRESLDAKSALSGSPAELGRSDYFLHPALRNKQEESVSLLSDHPTEKHLHGNCLNVTQLLWNFGLGQASHITPAHFTFLCPALLYQIESGVCLRHTEDHSQASKTSEGFLIALGWASLALLVISLPSLVALGMAPLLQPSVLQVFLCPMAGMAVGTLCGDALLHLMPHAIFSQHTDHQNAVFKGLSVLGGLYLLFIFESLLGLKQHFKNLKRRKHDAECGRELDALQGTSSANQNESSGHGHSHGQAEPGQTGIRSMAWMVVMGDGIHNLTDGLAIGVAFSQSLTGGFSTAIAVFCHELPHELGDLAVLLSAGWPVRRLLVFSGLSALLGFVGVLAGSALGNHWASHSPWILTLTAGVFLYVALADMMPEMLHGACGSVSPLKRFLLQALGLLTGGAIMLCIALFEDHIAVSLGENSLGEN.

At 1–242 the chain is on the extracellular side; the sequence is MGGQTVWMTL…HSQASKTSEG (242 aa). The disordered stretch occupies residues 108-148; it reads KHPSQSISHSHSHEDHHPSQGTTNSPPLRESLDAKSALSGS. Residues 243-263 form a helical membrane-spanning segment; it reads FLIALGWASLALLVISLPSLV. The Cytoplasmic portion of the chain corresponds to 264 to 314; sequence ALGMAPLLQPSVLQVFLCPMAGMAVGTLCGDALLHLMPHAIFSQHTDHQNA. A helical membrane pass occupies residues 315–335; the sequence is VFKGLSVLGGLYLLFIFESLL. At 336 to 408 the chain is on the extracellular side; it reads GLKQHFKNLK…DGIHNLTDGL (73 aa). A compositionally biased stretch (polar residues) spans 363 to 374; it reads TSSANQNESSGH. The segment at 363-383 is disordered; sequence TSSANQNESSGHGHSHGQAEP. The chain crosses the membrane as a helical span at residues 409-429; the sequence is AIGVAFSQSLTGGFSTAIAVF. Over 430-452 the chain is Cytoplasmic; sequence CHELPHELGDLAVLLSAGWPVRR. Residues 453-473 traverse the membrane as a helical segment; sequence LLVFSGLSALLGFVGVLAGSA. Residues 474–482 lie on the Extracellular side of the membrane; it reads LGNHWASHS. A helical transmembrane segment spans residues 483–503; sequence PWILTLTAGVFLYVALADMMP. Residues 504–518 lie on the Cytoplasmic side of the membrane; sequence EMLHGACGSVSPLKR. A helical membrane pass occupies residues 519-539; it reads FLLQALGLLTGGAIMLCIALF. Residues 540–555 are Extracellular-facing; the sequence is EDHIAVSLGENSLGEN.

Belongs to the ZIP transporter (TC 2.A.5) family.

Its subcellular location is the basolateral cell membrane. The catalysed reaction is Zn(2+)(in) = Zn(2+)(out). In terms of biological role, uniporter that transports zinc(2+) into polarized cells of enterocytes, pancreatic acinar and endoderm cells across the basolateral membrane and participates, notably, in zinc excretion from the intestine by the uptake of zinc from the blood into the intestine. The transport mechanism is temperature- and concentration-dependent and saturable. Mediates zinc homeostasis that is essential for venous angiogenesis. This chain is Zinc transporter ZIP5 (slc39a5), found in Danio rerio (Zebrafish).